A 985-amino-acid chain; its full sequence is UPF0182 protein Cgl0786/cg0896 (985 aa).

Transmembrane regions (helical) follow at residues 19–39 (VTWI…SVGF), 63–83 (IVLF…AGYF), 115–135 (VMVI…QRSW), 176–196 (SMML…MGGI), 215–235 (TQLA…YWLD), 262–282 (KIIL…AIFL), and 290–310 (LAVV…PLML). A disordered region spans residues 904-944 (KEAQDIEEVDGTATTPSTDETDTDTDQPATETPTAPVSEAE). Positions 929 to 939 (DQPATETPTAP) are enriched in low complexity.

This sequence belongs to the UPF0182 family.

Its subcellular location is the cell membrane. The polypeptide is UPF0182 protein Cgl0786/cg0896 (Corynebacterium glutamicum (strain ATCC 13032 / DSM 20300 / JCM 1318 / BCRC 11384 / CCUG 27702 / LMG 3730 / NBRC 12168 / NCIMB 10025 / NRRL B-2784 / 534)).